The chain runs to 709 residues: Polyribonucleotide nucleotidyltransferase (709 aa).

Residues D485 and D491 each contribute to the Mg(2+) site. The 60-residue stretch at 552 to 611 (PRIYTMKIDPKKIKDVIGKGGATIRSLTEETGTSIDIDDDGTVKIAAVDSNAAKNVMGRI) folds into the KH domain. Residues 621-689 (GAIYKGKVTR…RQGRIRLTMK (69 aa)) enclose the S1 motif domain.

The protein belongs to the polyribonucleotide nucleotidyltransferase family. In terms of assembly, component of the RNA degradosome, which is a multiprotein complex involved in RNA processing and mRNA degradation. Mg(2+) is required as a cofactor.

Its subcellular location is the cytoplasm. The catalysed reaction is RNA(n+1) + phosphate = RNA(n) + a ribonucleoside 5'-diphosphate. In terms of biological role, involved in mRNA degradation. Catalyzes the phosphorolysis of single-stranded polyribonucleotides processively in the 3'- to 5'-direction. The protein is Polyribonucleotide nucleotidyltransferase of Haemophilus influenzae (strain PittGG).